Here is a 673-residue protein sequence, read N- to C-terminus: DNA ligase (673 aa).

NAD(+) contacts are provided by residues 36–40 (DSEYD), 85–86 (SL), and Glu-118. Lys-120 serves as the catalytic N6-AMP-lysine intermediate. NAD(+)-binding residues include Arg-141, Glu-178, Lys-295, and Lys-319. Residues Cys-413, Cys-416, Cys-431, and Cys-437 each contribute to the Zn(2+) site. A BRCT domain is found at 596–673 (VRDNPLKGKT…SENEFLALLA (78 aa)).

It belongs to the NAD-dependent DNA ligase family. LigA subfamily. Requires Mg(2+) as cofactor. Mn(2+) is required as a cofactor.

It carries out the reaction NAD(+) + (deoxyribonucleotide)n-3'-hydroxyl + 5'-phospho-(deoxyribonucleotide)m = (deoxyribonucleotide)n+m + AMP + beta-nicotinamide D-nucleotide.. Functionally, DNA ligase that catalyzes the formation of phosphodiester linkages between 5'-phosphoryl and 3'-hydroxyl groups in double-stranded DNA using NAD as a coenzyme and as the energy source for the reaction. It is essential for DNA replication and repair of damaged DNA. In Histophilus somni (strain 129Pt) (Haemophilus somnus), this protein is DNA ligase.